We begin with the raw amino-acid sequence, 458 residues long: Purple acid phosphatase 23 (458 aa).

The first 19 residues, methionine 1–alanine 19, serve as a signal peptide directing secretion. Asparagine 59, asparagine 121, and asparagine 136 each carry an N-linked (GlcNAc...) asparagine glycan. Aspartate 194 provides a ligand contact to Fe cation. The N-linked (GlcNAc...) asparagine glycan is linked to asparagine 200. Residues aspartate 221 and tyrosine 224 each coordinate Fe cation. Aspartate 221 provides a ligand contact to Mn(2+). A Mn(2+)-binding site is contributed by asparagine 278. Substrate is bound at residue asparagine 278. N-linked (GlcNAc...) asparagine glycosylation is present at asparagine 331. Histidine 360 serves as a coordination point for Mn(2+). Catalysis depends on histidine 370, which acts as the Proton donor. Mn(2+) is bound at residue histidine 397. Position 397-399 (histidine 397–histidine 399) interacts with substrate. Position 399 (histidine 399) interacts with Fe cation. N-linked (GlcNAc...) asparagine glycans are attached at residues asparagine 409 and asparagine 455.

Belongs to the metallophosphoesterase superfamily. Purple acid phosphatase family. As to quaternary structure, homodimer. It depends on Fe cation as a cofactor. Mn(2+) serves as cofactor. As to expression, specifically expressed in flowers.

It localises to the secreted. The enzyme catalyses a phosphate monoester + H2O = an alcohol + phosphate. Acid phosphatase activity with ATP, ADP, dATP, pyrophosphate, polyphosphate, phosphoserine and phosphothreonine. Low or no activity with phosphotyrosine, AMP and phytate. The sequence is that of Purple acid phosphatase 23 (PAP23) from Arabidopsis thaliana (Mouse-ear cress).